A 238-amino-acid polypeptide reads, in one-letter code: ATP synthase subunit a, chloroplastic (238 aa).

5 helical membrane-spanning segments follow: residues G27–G47, V86–L106, I125–S145, L190–L210, and G211–N231.

It belongs to the ATPase A chain family. In terms of assembly, F-type ATPases have 2 components, F(1) - the catalytic core - and F(0) - the membrane proton channel. F(1) has five subunits: alpha(3), beta(3), gamma(1), delta(1), epsilon(1). F(0) has four main subunits: a(1), b(1), b'(1) and c(10-14). The alpha and beta chains form an alternating ring which encloses part of the gamma chain. F(1) is attached to F(0) by a central stalk formed by the gamma and epsilon chains, while a peripheral stalk is formed by the delta, b and b' chains.

The protein localises to the plastid. It localises to the chloroplast thylakoid membrane. F(1)F(0) ATP synthase produces ATP from ADP in the presence of a proton or sodium gradient. F-type ATPases consist of two structural domains, F(1) containing the extramembraneous catalytic core and F(0) containing the membrane proton channel, linked together by a central stalk and a peripheral stalk. During catalysis, ATP synthesis in the catalytic domain of F(1) is coupled via a rotary mechanism of the central stalk subunits to proton translocation. The sequence is that of ATP synthase subunit a, chloroplastic from Chlamydomonas reinhardtii (Chlamydomonas smithii).